We begin with the raw amino-acid sequence, 439 residues long: Acyl-coenzyme A thioesterase 10, mitochondrial (439 aa).

The N-terminal 21 residues, methionine 1 to glycine 21, are a transit peptide targeting the mitochondrion. HotDog ACOT-type domains follow at residues serine 85 to glutamate 209 and glutamate 289 to valine 401.

Belongs to the acyl coenzyme A hydrolase family.

Its subcellular location is the mitochondrion. Functionally, catalyzes the hydrolysis of acyl-CoAs into free fatty acids and coenzyme A (CoASH), regulating their respective intracellular levels. Active on long chain acyl-CoAs. The sequence is that of Acyl-coenzyme A thioesterase 10, mitochondrial from Mus musculus (Mouse).